The primary structure comprises 67 residues: Major cold shock protein (67 aa).

The region spanning 4–63 (GTVKWFNAEKGFGFISTENGQDVFAHFSAIQTSGFKTLEEGQKVAFDVEEGQRGPQAVNI) is the CSD domain.

As to quaternary structure, homodimer.

Its subcellular location is the cytoplasm. This Streptococcus pyogenes serotype M6 (strain ATCC BAA-946 / MGAS10394) protein is Major cold shock protein (cspA).